The primary structure comprises 515 residues: 1-pyrroline-5-carboxylate dehydrogenase (515 aa).

Residues E286 and C320 contribute to the active site.

The protein belongs to the aldehyde dehydrogenase family. RocA subfamily.

The catalysed reaction is L-glutamate 5-semialdehyde + NAD(+) + H2O = L-glutamate + NADH + 2 H(+). Its pathway is amino-acid degradation; L-proline degradation into L-glutamate; L-glutamate from L-proline: step 2/2. In Geobacillus kaustophilus (strain HTA426), this protein is 1-pyrroline-5-carboxylate dehydrogenase.